The primary structure comprises 639 residues: tRNA uridine 5-carboxymethylaminomethyl modification enzyme MnmG (639 aa).

13-18 (GGGHAG) serves as a coordination point for FAD. 274-288 (GPRYCPSIEDKIHRF) lines the NAD(+) pocket.

It belongs to the MnmG family. Homodimer. Heterotetramer of two MnmE and two MnmG subunits. It depends on FAD as a cofactor.

Its subcellular location is the cytoplasm. In terms of biological role, NAD-binding protein involved in the addition of a carboxymethylaminomethyl (cmnm) group at the wobble position (U34) of certain tRNAs, forming tRNA-cmnm(5)s(2)U34. The polypeptide is tRNA uridine 5-carboxymethylaminomethyl modification enzyme MnmG (Polynucleobacter asymbioticus (strain DSM 18221 / CIP 109841 / QLW-P1DMWA-1) (Polynucleobacter necessarius subsp. asymbioticus)).